The chain runs to 310 residues: uncharacterized protein (310 aa).

In terms of domain architecture, HTH lysR-type spans 5-62; the sequence is FTEENLLAFTTAARFGSFSKAAEELGLTTSAISYTIKRMETGLDVVLFTRSTRSIELT. The H-T-H motif DNA-binding region spans 22 to 42; it reads FSKAAEELGLTTSAISYTIKR.

It belongs to the LysR transcriptional regulatory family.

This is an uncharacterized protein from Escherichia coli (strain K12).